Consider the following 114-residue polypeptide: Ribonuclease P protein component (114 aa).

This sequence belongs to the RnpA family. As to quaternary structure, consists of a catalytic RNA component (M1 or rnpB) and a protein subunit.

It carries out the reaction Endonucleolytic cleavage of RNA, removing 5'-extranucleotides from tRNA precursor.. RNaseP catalyzes the removal of the 5'-leader sequence from pre-tRNA to produce the mature 5'-terminus. It can also cleave other RNA substrates such as 4.5S RNA. The protein component plays an auxiliary but essential role in vivo by binding to the 5'-leader sequence and broadening the substrate specificity of the ribozyme. This chain is Ribonuclease P protein component, found in Clostridioides difficile (strain 630) (Peptoclostridium difficile).